The chain runs to 324 residues: S-methyl-5'-thioadenosine phosphorylase (324 aa).

Residues Ser-14, Arg-57 to His-58, and Ser-90 to Ala-91 each bind phosphate. Met-196 lines the substrate pocket. Ser-197 provides a ligand contact to phosphate. Asp-220 to Asp-222 is a binding site for substrate.

Belongs to the PNP/MTAP phosphorylase family. MTAP subfamily. Homotrimer.

It localises to the cytoplasm. The protein resides in the nucleus. The catalysed reaction is S-methyl-5'-thioadenosine + phosphate = 5-(methylsulfanyl)-alpha-D-ribose 1-phosphate + adenine. Its pathway is amino-acid biosynthesis; L-methionine biosynthesis via salvage pathway; S-methyl-5-thio-alpha-D-ribose 1-phosphate from S-methyl-5'-thioadenosine (phosphorylase route): step 1/1. Its function is as follows. Catalyzes the reversible phosphorylation of S-methyl-5'-thioadenosine (MTA) to adenine and 5-methylthioribose-1-phosphate. Involved in the breakdown of MTA, a major by-product of polyamine biosynthesis. Responsible for the first step in the methionine salvage pathway after MTA has been generated from S-adenosylmethionine. Has broad substrate specificity with 6-aminopurine nucleosides as preferred substrates. This is S-methyl-5'-thioadenosine phosphorylase from Coprinopsis cinerea (strain Okayama-7 / 130 / ATCC MYA-4618 / FGSC 9003) (Inky cap fungus).